A 292-amino-acid polypeptide reads, in one-letter code: MGEKSENCGVPEDLLNGLKVTDTQEAECAGPPVPDPKNQHSQSKLLRDDEAHLQEDQGEEECFHDCSASFEEEPGADKVENKSNEDVNSSELDEEYLIELEKNMSDEEKQKRREESTRLKEEGNEQFKKGDYIEAESSYSRALEMCPSCFQKERSILFSNRAAARMKQDKKEMAINDCSKAIQLNPSYIRAILRRAELYEKTDKLDEALEDYKSILEKDPSIHQAREACMRLPKQIEERNERLKEEMLGKLKDLGNLVLRPFGLSTENFQIKQDSSTGSYSINFVQNPNNNR.

The tract at residues 23 to 125 (TQEAECAGPP…STRLKEEGNE (103 aa)) is disordered. Basic and acidic residues-rich tracts occupy residues 45–55 (LLRDDEAHLQE) and 75–85 (GADKVENKSNE). 2 positions are modified to phosphoserine: Ser83 and Ser90. Residues 99 to 125 (ELEKNMSDEEKQKRREESTRLKEEGNE) are compositionally biased toward basic and acidic residues. TPR repeat units lie at residues 116 to 149 (STRLKEEGNEQFKKGDYIEAESSYSRALEMCPSC), 155 to 188 (SILFSNRAAARMKQDKKEMAINDCSKAIQLNPSY), and 189 to 222 (IRAILRRAELYEKTDKLDEALEDYKSILEKDPSI).

Interacts with the GAP domain of NF1. Interacts (via TPR repeats) with HSP90AA1 and HSPA8.

The sequence is that of Tetratricopeptide repeat protein 1 (TTC1) from Homo sapiens (Human).